We begin with the raw amino-acid sequence, 366 residues long: Histidinol-phosphate aminotransferase 2 (366 aa).

Positions 1–11 (MQVKDQLSSLQ) are enriched in polar residues. Positions 1–21 (MQVKDQLSSLQPYKPGKSPEQ) are disordered. Residue lysine 222 is modified to N6-(pyridoxal phosphate)lysine.

The protein belongs to the class-II pyridoxal-phosphate-dependent aminotransferase family. Histidinol-phosphate aminotransferase subfamily. As to quaternary structure, homodimer. Pyridoxal 5'-phosphate serves as cofactor.

The catalysed reaction is L-histidinol phosphate + 2-oxoglutarate = 3-(imidazol-4-yl)-2-oxopropyl phosphate + L-glutamate. The protein operates within amino-acid biosynthesis; L-histidine biosynthesis; L-histidine from 5-phospho-alpha-D-ribose 1-diphosphate: step 7/9. The sequence is that of Histidinol-phosphate aminotransferase 2 from Bacillus thuringiensis subsp. konkukian (strain 97-27).